The following is a 345-amino-acid chain: S-adenosylmethionine:tRNA ribosyltransferase-isomerase (345 aa).

The protein belongs to the QueA family. Monomer.

It localises to the cytoplasm. It catalyses the reaction 7-aminomethyl-7-carbaguanosine(34) in tRNA + S-adenosyl-L-methionine = epoxyqueuosine(34) in tRNA + adenine + L-methionine + 2 H(+). Its pathway is tRNA modification; tRNA-queuosine biosynthesis. Transfers and isomerizes the ribose moiety from AdoMet to the 7-aminomethyl group of 7-deazaguanine (preQ1-tRNA) to give epoxyqueuosine (oQ-tRNA). The sequence is that of S-adenosylmethionine:tRNA ribosyltransferase-isomerase from Thermodesulfovibrio yellowstonii (strain ATCC 51303 / DSM 11347 / YP87).